We begin with the raw amino-acid sequence, 285 residues long: Hydroxyacylglutathione hydrolase, mitochondrial (285 aa).

A mitochondrion-targeting transit peptide spans Met-1–Asn-10. Zn(2+) contacts are provided by His-69, His-71, Asp-73, His-74, His-131, Asp-154, and His-198.

Zn(2+) serves as cofactor.

Its subcellular location is the mitochondrion matrix. It catalyses the reaction an S-(2-hydroxyacyl)glutathione + H2O = a 2-hydroxy carboxylate + glutathione + H(+). The catalysed reaction is (R)-S-lactoylglutathione + H2O = (R)-lactate + glutathione + H(+). It participates in secondary metabolite metabolism; methylglyoxal degradation; (R)-lactate from methylglyoxal: step 2/2. Inhibited by various thiol compounds such as glutathione and coenzyme A. Thiolesterase that catalyzes the hydrolysis of S-D-lactoylglutathione to form glutathione and D-lactic acid. Involved in the metabolism of methylglyoxal, a toxic compound for yeast proliferation, by converting methylglyoxal to lactate via S-D-lactoylglutathione by sequential enzyme reactions catalyzed by glyoxalase I and glyoxalase II. The sequence is that of Hydroxyacylglutathione hydrolase, mitochondrial from Saccharomyces cerevisiae (strain ATCC 204508 / S288c) (Baker's yeast).